The chain runs to 429 residues: MANNTWKLIATTALISVFSTQLAKSVWKEYKLSCAANKNKTVSRPRQYDDHLFREQLARNYAFLGEEGMRKIKEQYIVIVGAGEVGSWVCTMLIRSGCQKIMIIDPENISIDSLNTHCCAVLSDIGKPKVQCLKEHLSKIAPWSEIKARAKAWTKENSHDLIFADGESPTFIVDCLDNLESKVDLLEYAHHNKIDVISSMGVATKSDPTRVSINDISMTEFDPISRCVRRKLRKRGIATGISVVFSNEMLDPRRDDILSPIDCEHRAINAVRDEALRHLPELGTMPGIFGLSIATWILTKVSGYPMKENEVKNRLKFYDSILETFQKQMARLNENKERSSLLGLEEVGYIVEEMFRGKSPISGYSTKLALTKWEANKEISLTNVVLMTKEEQEIHEKRILLDGEKLTAVYSEEVLDFIERLFKEEEYYS.

2 helical membrane-spanning segments follow: residues Asn-3–Ala-23 and Glu-74–Ile-94. A Phosphoserine modification is found at Ser-259. The helical transmembrane segment at Leu-279–Thr-299 threads the bilayer.

It belongs to the HesA/MoeB/ThiF family.

It is found in the mitochondrion outer membrane. In terms of biological role, catalyzes the ATP-dependent dehydration of threonylcarbamoyladenosine at position 37 (t(6)A37) to form cyclic t(6)A37 (ct(6)A37) in tRNAs that read codons beginning with adenine. This Saccharomyces cerevisiae (strain ATCC 204508 / S288c) (Baker's yeast) protein is tRNA threonylcarbamoyladenosine dehydratase 1 (TCD1).